We begin with the raw amino-acid sequence, 514 residues long: 2,3-bisphosphoglycerate-independent phosphoglycerate mutase (514 aa).

Mn(2+) contacts are provided by Asp14 and Ser64. Ser64 functions as the Phosphoserine intermediate in the catalytic mechanism. Residues His125, 155 to 156 (RD), Arg187, Arg193, 263 to 266 (RADR), and Lys336 contribute to the substrate site. Mn(2+)-binding residues include Asp403, His407, Asp444, His445, and His463.

Belongs to the BPG-independent phosphoglycerate mutase family. Monomer. The cofactor is Mn(2+).

It catalyses the reaction (2R)-2-phosphoglycerate = (2R)-3-phosphoglycerate. It functions in the pathway carbohydrate degradation; glycolysis; pyruvate from D-glyceraldehyde 3-phosphate: step 3/5. Its function is as follows. Catalyzes the interconversion of 2-phosphoglycerate and 3-phosphoglycerate. In Shewanella sp. (strain ANA-3), this protein is 2,3-bisphosphoglycerate-independent phosphoglycerate mutase.